A 594-amino-acid polypeptide reads, in one-letter code: E3 ubiquitin-protein ligase TRAF7 (594 aa).

The segment at Met1–Leu33 is disordered. Ser12 and Ser15 each carry phosphoserine. Low complexity predominate over residues Ser15 to Ser29. Residues Cys55 to Asn89 form an RING-type zinc finger. The TRAF-type zinc-finger motif lies at His146 to Gln216. WD repeat units follow at residues Gly318–Lys357, Gly361–Thr398, Ala401–Lys437, Glu439–Val478, Thr481–Thr518, Gly521–Thr562, and Arg565–Thr593.

Belongs to the WD repeat TRAF7 family. As to quaternary structure, homodimer. Interacts with MAP3K3 and promotes the kinase activity of this enzyme. Post-translationally, phosphorylated by MAP3K3. Ubiquitinates itself upon phosphorylation. Ubiquitously expressed. Expression is relatively high in heart, liver, kidney, testis, prostate, thyroid, and salivary gland.

The protein resides in the cytoplasmic vesicle. It localises to the cytoplasm. It is found in the nucleus. The enzyme catalyses S-ubiquitinyl-[E2 ubiquitin-conjugating enzyme]-L-cysteine + [acceptor protein]-L-lysine = [E2 ubiquitin-conjugating enzyme]-L-cysteine + N(6)-ubiquitinyl-[acceptor protein]-L-lysine.. The protein operates within protein modification; protein ubiquitination. E3 ubiquitin and SUMO-protein ligase that plays a role in different biological processes such as innate immunity, inflammation or apoptosis. Potentiates MAP3K3-mediated activation of the NF-kappa-B, JUN/AP1 and DDIT3 transcriptional regulators. Negatively regulates MYB transcriptional activity by sequestering it to the cytosol via SUMOylation. Plays a role in the phosphorylation of MAPK1 and/or MAPK3, probably via its interaction with MAP3K3. Negatively regulates RLR-mediated innate immunity by promoting 'Lys-48'-linked ubiquitination of TBK1 through its RING domain to inhibit the cellular antiviral response. Promotes 'Lys-29'-linked polyubiquitination of NEMO/IKBKG and RELA leading to targeting these two proteins to lysosomal degradative pathways, reducing the transcriptional activity of NF-kappa-B. This is E3 ubiquitin-protein ligase TRAF7 from Mus musculus (Mouse).